Reading from the N-terminus, the 412-residue chain is NADH-ubiquinone oxidoreductase 49 kDa subunit (412 aa).

It belongs to the complex I 49 kDa subunit family.

Its subcellular location is the hydrogenosome. The catalysed reaction is a ubiquinone + NADH + 5 H(+)(in) = a ubiquinol + NAD(+) + 4 H(+)(out). In terms of biological role, transfer of electrons from NADH to the respiratory chain. The immediate electron acceptor for the enzyme is believed to be ubiquinone. Component of the iron-sulfur (IP) fragment of the enzyme. In Nyctotherus ovalis, this protein is NADH-ubiquinone oxidoreductase 49 kDa subunit (nad7).